The primary structure comprises 738 residues: Elongation factor G, mitochondrial (738 aa).

Residues 1–20 (MCIGPAPTPETEEELPPSPQ) are disordered. Residues 32 to 320 (RFQRNIGVSA…GVCAYLPNPA (289 aa)) enclose the tr-type G domain. GTP is bound by residues 41 to 48 (AHIDSGKT), 118 to 122 (DTPGH), and 172 to 175 (NKMD).

It belongs to the TRAFAC class translation factor GTPase superfamily. Classic translation factor GTPase family. EF-G/EF-2 subfamily.

The protein localises to the mitochondrion. Its pathway is protein biosynthesis; polypeptide chain elongation. In terms of biological role, mitochondrial GTPase that catalyzes the GTP-dependent ribosomal translocation step during translation elongation. During this step, the ribosome changes from the pre-translocational (PRE) to the post-translocational (POST) state as the newly formed A-site-bound peptidyl-tRNA and P-site-bound deacylated tRNA move to the P and E sites, respectively. Catalyzes the coordinated movement of the two tRNA molecules, the mRNA and conformational changes in the ribosome. The sequence is that of Elongation factor G, mitochondrial from Laccaria bicolor (strain S238N-H82 / ATCC MYA-4686) (Bicoloured deceiver).